Consider the following 568-residue polypeptide: 2-succinyl-5-enolpyruvyl-6-hydroxy-3-cyclohexene-1-carboxylate synthase (568 aa).

It belongs to the TPP enzyme family. MenD subfamily. As to quaternary structure, homodimer. The cofactor is Mg(2+). Mn(2+) serves as cofactor. Thiamine diphosphate is required as a cofactor.

It catalyses the reaction isochorismate + 2-oxoglutarate + H(+) = 5-enolpyruvoyl-6-hydroxy-2-succinyl-cyclohex-3-ene-1-carboxylate + CO2. It participates in quinol/quinone metabolism; 1,4-dihydroxy-2-naphthoate biosynthesis; 1,4-dihydroxy-2-naphthoate from chorismate: step 2/7. Its pathway is quinol/quinone metabolism; menaquinone biosynthesis. In terms of biological role, catalyzes the thiamine diphosphate-dependent decarboxylation of 2-oxoglutarate and the subsequent addition of the resulting succinic semialdehyde-thiamine pyrophosphate anion to isochorismate to yield 2-succinyl-5-enolpyruvyl-6-hydroxy-3-cyclohexene-1-carboxylate (SEPHCHC). The sequence is that of 2-succinyl-5-enolpyruvyl-6-hydroxy-3-cyclohexene-1-carboxylate synthase from Actinobacillus pleuropneumoniae serotype 7 (strain AP76).